The primary structure comprises 624 residues: Laccase-1 (624 aa).

The first 20 residues, 1 to 20 (MRGVVKLFFLSCSLVSLVSS), serve as a signal peptide directing secretion. Plastocyanin-like domains are found at residues 69–183 (TKAL…HSPN) and 195–355 (DRIV…VVRY). Cu cation is bound by residues H117, H119, H162, and H164. C138 and C578 form a disulfide bridge. N242, N320, and N430 each carry an N-linked (GlcNAc...) asparagine glycan. The 94-residue stretch at 469-562 (IIINNLDGVI…GKLAVVVIQP (94 aa)) folds into the Plastocyanin-like 3 domain. Cu cation contacts are provided by H480, H483, and H485. N503 carries an N-linked (GlcNAc...) asparagine glycan. 4 residues coordinate Cu cation: H543, C544, H545, and H549. A disordered region spans residues 582–603 (DPNAFGPARRSPSPSIQSSKTS). Residues 592–603 (SPSPSIQSSKTS) show a composition bias toward low complexity.

Belongs to the multicopper oxidase family. Cu cation serves as cofactor.

It is found in the secreted. The protein resides in the cell wall. The enzyme catalyses 4 hydroquinone + O2 = 4 benzosemiquinone + 2 H2O. Functionally, laccase that catalyzes the oxidation of certain aromatic compounds, including L-dopa, to quinones, which then polymerize to melanin. Able to oxidize a wide variety of aromatic diphenol and diamino groups in the ortho, meta, and para positions but not monophenolic groups such as in phenol, tyramine, or tyrosine. Plays an important role in virulence. Plays a role in dissemination to extrapulmonary sites but is not involved in pulmonary growth or in elicitation of cellular immune responses in the lung. The chain is Laccase-1 (LAC1) from Cryptococcus neoformans var. grubii serotype A (strain H99 / ATCC 208821 / CBS 10515 / FGSC 9487) (Filobasidiella neoformans var. grubii).